A 223-amino-acid chain; its full sequence is DNA-directed RNA polymerase III subunit RPC7 (223 aa).

The disordered stretch occupies residues 110-223 (MMPRNKCKKA…SDDNMDEATY (114 aa)). Basic residues predominate over residues 114 to 125 (NKCKKAGPKPKK). A Phosphothreonine modification is found at threonine 133. Basic and acidic residues predominate over residues 140 to 155 (DVLKKMEELEKRGDGE). A Phosphoserine modification is found at serine 157. Basic and acidic residues predominate over residues 164 to 173 (KEGSKEKSKE). Acidic residues-rich tracts occupy residues 174-198 (GDDDDDDDAAEQEEYDEEEQEEEND) and 205-223 (EDGDDFGADSDDNMDEATY).

This sequence belongs to the eukaryotic RPC7 RNA polymerase subunit family. As to quaternary structure, component of the RNA polymerase III complex consisting of 17 subunits: a ten-subunit horseshoe-shaped catalytic core composed of POLR3A/RPC1, POLR3B/RPC2, POLR1C/RPAC1, POLR1D/RPAC2, POLR3K/RPC10, POLR2E/RPABC1, POLR2F/RPABC2, POLR2H/RPABC3, POLR2K/RPABC4 and POLR2L/RPABC5; a mobile stalk composed of two subunits POLR3H/RPC8 and CRCP/RPC9, protruding from the core and functioning primarily in transcription initiation; and additional subunits homologous to general transcription factors of the RNA polymerase II machinery, POLR3C/RPC3-POLR3F/RPC6-POLR3G/RPC7 heterotrimer required for transcription initiation and POLR3D/RPC4-POLR3E/RPC5 heterodimer involved in both transcription initiation and termination. Directly interacts with POLR3C/RPC62. Also found in a trimeric complex with POLR3C/RPC3 and POLR3GL. Barely detectable in differentiated tissues. Expressed in embryonic stem cells and in other dividing cells, such as some tumor cell lines.

The protein localises to the nucleus. The protein resides in the cytoplasm. In terms of biological role, DNA-dependent RNA polymerase catalyzes the transcription of DNA into RNA using the four ribonucleoside triphosphates as substrates. Specific peripheric component of RNA polymerase III (Pol III) which synthesizes small non-coding RNAs including 5S rRNA, snRNAs, tRNAs and miRNAs from at least 500 distinct genomic loci. Acts as a long tether that bridges POLR3C/RPC3-POLR3F/RPC6-POLR3G/RPC7 heterotrimer and the mobile stalk of Pol III, coordinating the dynamics of Pol III stalk and clamp modules during the transition from apo to elongation state. Pol III exists as two alternative complexes defined by the mutually exclusive incorporation of subunit POLR3G/RPC7alpha or POLR3GL/RPC7beta. POLR3G/RPC7alpha modulates Pol III transcriptome by specifically enhancing the transcription of snaR-A non-coding RNAs. At resting state, occupies the active site of apo Pol III and keeps Pol III in an autoinhibitory mode, preventing non-specific transcription. Pol III plays a key role in sensing and limiting infection by intracellular bacteria and DNA viruses. Acts as a nuclear and cytosolic DNA sensor involved in innate immune response. Can sense non-self dsDNA that serves as template for transcription into dsRNA. The non-self RNA polymerase III transcripts, such as Epstein-Barr virus-encoded RNAs (EBERs), induce type I interferon and NF-kappa-B through the RIG-I pathway. This chain is DNA-directed RNA polymerase III subunit RPC7, found in Homo sapiens (Human).